We begin with the raw amino-acid sequence, 216 residues long: Probable flavin-dependent thymidylate synthase (216 aa).

The 216-residue stretch at 1–216 folds into the ThyX domain; sequence MSAKLISVTK…PSIAKALDWV (216 aa). FAD is bound by residues Ser55, 78–80, and Glu86; that span reads RHR. Residues 75-78, 86-90, and Arg155 each bind dUMP; these read QVLR and EFSQR. Residues 78–88 carry the ThyX motif motif; it reads RHRSFHFQEFS. His177 provides a ligand contact to FAD. Residue Arg182 participates in dUMP binding. The active-site Involved in ionization of N3 of dUMP, leading to its activation is the Arg182.

Belongs to the thymidylate synthase ThyX family. Homotetramer. FAD serves as cofactor.

The enzyme catalyses dUMP + (6R)-5,10-methylene-5,6,7,8-tetrahydrofolate + NADPH + H(+) = dTMP + (6S)-5,6,7,8-tetrahydrofolate + NADP(+). It participates in pyrimidine metabolism; dTTP biosynthesis. In terms of biological role, catalyzes the reductive methylation of 2'-deoxyuridine-5'-monophosphate (dUMP) to 2'-deoxythymidine-5'-monophosphate (dTMP) while utilizing 5,10-methylenetetrahydrofolate (mTHF) as the methyl donor, and NADPH and FADH(2) as the reductant. In Paramecium bursaria Chlorella virus 1 (PBCV-1), this protein is Probable flavin-dependent thymidylate synthase.